Reading from the N-terminus, the 255-residue chain is 5-oxoprolinase subunit A (255 aa).

It belongs to the LamB/PxpA family. As to quaternary structure, forms a complex composed of PxpA, PxpB and PxpC.

It catalyses the reaction 5-oxo-L-proline + ATP + 2 H2O = L-glutamate + ADP + phosphate + H(+). Catalyzes the cleavage of 5-oxoproline to form L-glutamate coupled to the hydrolysis of ATP to ADP and inorganic phosphate. This is 5-oxoprolinase subunit A from Clostridium beijerinckii (strain ATCC 51743 / NCIMB 8052) (Clostridium acetobutylicum).